A 146-amino-acid polypeptide reads, in one-letter code: 3-dehydroquinate dehydratase (146 aa).

Y23 serves as the catalytic Proton acceptor. Substrate-binding residues include N79, H85, and D92. H105 (proton donor) is an active-site residue. Substrate contacts are provided by residues 106–107 (IS) and R116.

Belongs to the type-II 3-dehydroquinase family. As to quaternary structure, homododecamer.

It carries out the reaction 3-dehydroquinate = 3-dehydroshikimate + H2O. It participates in metabolic intermediate biosynthesis; chorismate biosynthesis; chorismate from D-erythrose 4-phosphate and phosphoenolpyruvate: step 3/7. Its function is as follows. Catalyzes a trans-dehydration via an enolate intermediate. The sequence is that of 3-dehydroquinate dehydratase from Variovorax paradoxus (strain S110).